A 291-amino-acid polypeptide reads, in one-letter code: ATP synthase gamma chain (291 aa).

Belongs to the ATPase gamma chain family. In terms of assembly, F-type ATPases have 2 components, CF(1) - the catalytic core - and CF(0) - the membrane proton channel. CF(1) has five subunits: alpha(3), beta(3), gamma(1), delta(1), epsilon(1). CF(0) has three main subunits: a, b and c.

Its subcellular location is the cell membrane. In terms of biological role, produces ATP from ADP in the presence of a proton gradient across the membrane. The gamma chain is believed to be important in regulating ATPase activity and the flow of protons through the CF(0) complex. The sequence is that of ATP synthase gamma chain from Streptococcus pyogenes serotype M1.